Here is a 100-residue protein sequence, read N- to C-terminus: Putative exopolysaccharide production repressor protein y4xQ (100 aa).

2 helical membrane-spanning segments follow: residues 9–29 and 35–55; these read ILWLFLCANTLIVYLVTGSIS and TMVGSLLLQLTYFANVLFLLW. Residues 66–100 are disordered; sequence TTGQFHGEEQPGDPRIAGTHGRTDGDPCFEDEDSR.

The protein to Rhizobium exopolysaccharide production repressor protein (ExoX).

It is found in the cell membrane. In terms of biological role, could be involved in the inhibition of exopolysaccharide synthesis (EPS) and nodulation ability (nod). In Sinorhizobium fredii (strain NBRC 101917 / NGR234), this protein is Putative exopolysaccharide production repressor protein y4xQ.